The primary structure comprises 93 residues: Pyrimidine/purine nucleoside phosphorylase (93 aa).

This sequence belongs to the nucleoside phosphorylase PpnP family.

It carries out the reaction a purine D-ribonucleoside + phosphate = a purine nucleobase + alpha-D-ribose 1-phosphate. The catalysed reaction is adenosine + phosphate = alpha-D-ribose 1-phosphate + adenine. It catalyses the reaction cytidine + phosphate = cytosine + alpha-D-ribose 1-phosphate. The enzyme catalyses guanosine + phosphate = alpha-D-ribose 1-phosphate + guanine. It carries out the reaction inosine + phosphate = alpha-D-ribose 1-phosphate + hypoxanthine. The catalysed reaction is thymidine + phosphate = 2-deoxy-alpha-D-ribose 1-phosphate + thymine. It catalyses the reaction uridine + phosphate = alpha-D-ribose 1-phosphate + uracil. The enzyme catalyses xanthosine + phosphate = alpha-D-ribose 1-phosphate + xanthine. Its function is as follows. Catalyzes the phosphorolysis of diverse nucleosides, yielding D-ribose 1-phosphate and the respective free bases. Can use uridine, adenosine, guanosine, cytidine, thymidine, inosine and xanthosine as substrates. Also catalyzes the reverse reactions. The protein is Pyrimidine/purine nucleoside phosphorylase of Sorangium cellulosum (strain So ce56) (Polyangium cellulosum (strain So ce56)).